The following is a 510-amino-acid chain: Protein disulfide-isomerase (510 aa).

Residues 1–19 form the signal peptide; it reads MLRRALLCLAVAAAPGLYA. Residues 20–136 form the Thioredoxin 1 domain; sequence DAPEEEDHVL…IVNWLKKRTG (117 aa). Catalysis depends on nucleophile residues cysteine 55 and cysteine 58. Cysteines 55 and 58 form a disulfide. Position 202 is an N6-acetyllysine (lysine 202). N6-succinyllysine is present on residues lysine 224 and lysine 273. Serine 333 and serine 359 each carry phosphoserine. In terms of domain architecture, Thioredoxin 2 spans 351 to 477; the sequence is GKIKPHLMSQ…FKKFLESGGQ (127 aa). Residues cysteine 399 and cysteine 402 each act as nucleophile in the active site. An intrachain disulfide couples cysteine 399 to cysteine 402. The residue at position 429 (serine 429) is a Phosphoserine. Residues 473–510 are disordered; it reads ESGGQDGAGDDDDLEDLEEAEEPDMEEDDDQKAVKDEL. Residues 480–502 show a composition bias toward acidic residues; sequence AGDDDDLEDLEEAEEPDMEEDDD. The Prevents secretion from ER signature appears at 507–510; the sequence is KDEL.

Belongs to the protein disulfide isomerase family. Heterodimer; heterodimerizes with the protein microsomal triglyceride transfer MTTP. Homodimer. Homodimer. Monomers and homotetramers may also occur. Interacts with P4HA2, forming a heterotetramer consisting of 2 alpha subunits (P4HA2) and 2 beta (P4HB), where P4HB plays the role of a structural subunit; this tetramer catalyzes the formation of 4-hydroxyproline in collagen. Also constitutes the structural subunit of the microsomal triacylglycerol transfer protein MTTP in mammalian cells. Stabilizes both enzymes and retain them in the ER without contributing to the catalytic activity. Binds UBQLN1. Interacts with ERO1B. Interacts with ILDR2. Interacts with ERN1/IRE1A (via N-terminus); the interaction is enhanced by phosphorylation of P4HB by FAM20C in response to endoplasmic reticulum stress and results in attenuation of ERN1 activity. Post-translationally, phosphorylation of Ser-359 by FAM20C is induced by endoplasmic reticulum stress and results in a functional switch from oxidoreductase to molecular chaperone. It also promotes interaction with ERN1.

It is found in the endoplasmic reticulum. The protein resides in the endoplasmic reticulum lumen. Its subcellular location is the melanosome. It localises to the cell membrane. It catalyses the reaction Catalyzes the rearrangement of -S-S- bonds in proteins.. This multifunctional protein catalyzes the formation, breakage and rearrangement of disulfide bonds. At the cell surface, seems to act as a reductase that cleaves disulfide bonds of proteins attached to the cell. May therefore cause structural modifications of exofacial proteins. Inside the cell, seems to form/rearrange disulfide bonds of nascent proteins. At high concentrations and following phosphorylation by FAM20C, functions as a chaperone that inhibits aggregation of misfolded proteins. At low concentrations, facilitates aggregation (anti-chaperone activity). May be involved with other chaperones in the structural modification of the TG precursor in hormone biogenesis. Also acts as a structural subunit of various enzymes such as prolyl 4-hydroxylase and microsomal triacylglycerol transfer protein MTTP. Receptor for LGALS9; the interaction retains P4HB at the cell surface of Th2 T helper cells, increasing disulfide reductase activity at the plasma membrane, altering the plasma membrane redox state and enhancing cell migration. The polypeptide is Protein disulfide-isomerase (P4HB) (Macaca fuscata fuscata (Japanese macaque)).